The chain runs to 65 residues: Large ribosomal subunit protein bL35 (65 aa).

It belongs to the bacterial ribosomal protein bL35 family.

The chain is Large ribosomal subunit protein bL35 from Wolbachia sp. subsp. Brugia malayi (strain TRS).